A 197-amino-acid polypeptide reads, in one-letter code: Recombination protein RecR (197 aa).

Residues 57–72 form a C4-type zinc finger; the sequence is CSICFAITEDDPCAIC. A Toprim domain is found at 79–174; that stretch reads GTICVVENSQ…RISRLAHGIP (96 aa).

It belongs to the RecR family.

Its function is as follows. May play a role in DNA repair. It seems to be involved in an RecBC-independent recombinational process of DNA repair. It may act with RecF and RecO. The chain is Recombination protein RecR from Pelobacter propionicus (strain DSM 2379 / NBRC 103807 / OttBd1).